Reading from the N-terminus, the 356-residue chain is Tyrosine recombinase XerS (356 aa).

The 106-residue stretch at 16–121 (IMPWYVLDYY…ALSSLYKYLT (106 aa)) folds into the Core-binding (CB) domain. The region spanning 169 to 354 (AFLDYVDKEY…VNDEQKNALD (186 aa)) is the Tyr recombinase domain. Residues R210, K234, H306, R309, and H332 contribute to the active site. The O-(3'-phospho-DNA)-tyrosine intermediate role is filled by Y341.

This sequence belongs to the 'phage' integrase family. XerS subfamily.

The protein resides in the cytoplasm. Its activity is regulated as follows. FtsK is required for recombination. Its function is as follows. Site-specific tyrosine recombinase, which acts by catalyzing the cutting and rejoining of the recombining DNA molecules. Essential to convert dimers of the bacterial chromosome into monomers to permit their segregation at cell division. This is Tyrosine recombinase XerS from Streptococcus pyogenes serotype M49 (strain NZ131).